A 125-amino-acid polypeptide reads, in one-letter code: Holo-[acyl-carrier-protein] synthase (125 aa).

Mg(2+) contacts are provided by aspartate 8 and glutamate 55.

The protein belongs to the P-Pant transferase superfamily. AcpS family. Mg(2+) serves as cofactor.

The protein localises to the cytoplasm. It carries out the reaction apo-[ACP] + CoA = holo-[ACP] + adenosine 3',5'-bisphosphate + H(+). Functionally, transfers the 4'-phosphopantetheine moiety from coenzyme A to a Ser of acyl-carrier-protein. This is Holo-[acyl-carrier-protein] synthase from Treponema pallidum (strain Nichols).